Here is a 207-residue protein sequence, read N- to C-terminus: NADH-quinone oxidoreductase subunit A (207 aa).

A run of 3 helical transmembrane segments spans residues 6–26, 62–82, and 87–107; these read LSAI…LVVP, LVAI…AYAV, and AGWL…IGLV.

It belongs to the complex I subunit 3 family. NDH-1 is composed of 14 different subunits. Subunits NuoA, H, J, K, L, M, N constitute the membrane sector of the complex.

It is found in the cell inner membrane. It catalyses the reaction a quinone + NADH + 5 H(+)(in) = a quinol + NAD(+) + 4 H(+)(out). In terms of biological role, NDH-1 shuttles electrons from NADH, via FMN and iron-sulfur (Fe-S) centers, to quinones in the respiratory chain. The immediate electron acceptor for the enzyme in this species is believed to be ubiquinone. Couples the redox reaction to proton translocation (for every two electrons transferred, four hydrogen ions are translocated across the cytoplasmic membrane), and thus conserves the redox energy in a proton gradient. The chain is NADH-quinone oxidoreductase subunit A from Psychrobacter cryohalolentis (strain ATCC BAA-1226 / DSM 17306 / VKM B-2378 / K5).